Reading from the N-terminus, the 313-residue chain is Probable pyridoxal 5'-phosphate synthase subunit PDX1.2 (313 aa).

Asp-42 provides a ligand contact to D-ribose 5-phosphate. Lys-99 acts as the Schiff-base intermediate with D-ribose 5-phosphate in catalysis. Gly-171 lines the D-ribose 5-phosphate pocket. D-glyceraldehyde 3-phosphate is bound at residue Arg-183. D-ribose 5-phosphate contacts are provided by residues Gly-232 and 253 to 254; that span reads GS.

This sequence belongs to the PdxS/SNZ family.

The catalysed reaction is aldehydo-D-ribose 5-phosphate + D-glyceraldehyde 3-phosphate + L-glutamine = pyridoxal 5'-phosphate + L-glutamate + phosphate + 3 H2O + H(+). It functions in the pathway cofactor biosynthesis; pyridoxal 5'-phosphate biosynthesis. Its function is as follows. Catalyzes the formation of pyridoxal 5'-phosphate from ribose 5-phosphate (RBP), glyceraldehyde 3-phosphate (G3P) and ammonia. The ammonia is provided by PDX2. Can also use ribulose 5-phosphate and dihydroxyacetone phosphate as substrates, resulting from enzyme-catalyzed isomerization of RBP and G3P, respectively. Also plays an indirect role in resistance to singlet oxygen-generating photosensitizers. The protein is Probable pyridoxal 5'-phosphate synthase subunit PDX1.2 (PDX12) of Oryza sativa subsp. japonica (Rice).